Here is a 437-residue protein sequence, read N- to C-terminus: Epsilon-sarcoglycan (437 aa).

Residues 1 to 317 (MQLPWWWELG…LKSRDYYTDF (317 aa)) lie on the Extracellular side of the membrane. Asn200 carries N-linked (GlcNAc...) asparagine glycosylation. Residues 318–338 (LVTLAVPSAVALVLFLILAYI) form a helical membrane-spanning segment. Residues 339-437 (MCCRREGVEK…QQQTTGKWYS (99 aa)) lie on the Cytoplasmic side of the membrane. The interval 418 to 437 (QNLPHQTQIPQQQTTGKWYS) is disordered.

Belongs to the sarcoglycan alpha/epsilon family. Post-translationally, N-glycosylated. Ubiquitinated, leading to its degradation by the proteasome.

It localises to the cell membrane. Its subcellular location is the sarcolemma. It is found in the cytoplasm. The protein localises to the cytoskeleton. The protein resides in the cell projection. It localises to the dendrite. Its subcellular location is the golgi apparatus. Component of the sarcoglycan complex, a subcomplex of the dystrophin-glycoprotein complex which forms a link between the F-actin cytoskeleton and the extracellular matrix. This chain is Epsilon-sarcoglycan (SGCE), found in Bos taurus (Bovine).